Consider the following 182-residue polypeptide: Large ribosomal subunit protein uL5 (182 aa).

The protein belongs to the universal ribosomal protein uL5 family. In terms of assembly, part of the 50S ribosomal subunit; part of the 5S rRNA/L5/L18/L25 subcomplex. Contacts the 5S rRNA and the P site tRNA. Forms a bridge to the 30S subunit in the 70S ribosome.

This is one of the proteins that bind and probably mediate the attachment of the 5S RNA into the large ribosomal subunit, where it forms part of the central protuberance. In the 70S ribosome it contacts protein S13 of the 30S subunit (bridge B1b), connecting the 2 subunits; this bridge is implicated in subunit movement. Contacts the P site tRNA; the 5S rRNA and some of its associated proteins might help stabilize positioning of ribosome-bound tRNAs. The polypeptide is Large ribosomal subunit protein uL5 (Acidobacterium capsulatum (strain ATCC 51196 / DSM 11244 / BCRC 80197 / JCM 7670 / NBRC 15755 / NCIMB 13165 / 161)).